Reading from the N-terminus, the 81-residue chain is Small ribosomal subunit protein bS16 (81 aa).

Belongs to the bacterial ribosomal protein bS16 family.

The chain is Small ribosomal subunit protein bS16 from Alkaliphilus oremlandii (strain OhILAs) (Clostridium oremlandii (strain OhILAs)).